A 444-amino-acid chain; its full sequence is MKHFEANFDGLVGPTHNYAGLSFGNVASLNNAALVSNPKAAAKQGLQKAKALADLGMIQGMLAPQERPDLNTLRRIGFSGSDAQVLQQAAKTAPALLNACCSASSMWTANAATVSPSADTRDGKLHFTPANLVDKLHRSIEPITTGRILTATFNDPHYFYHHNHLPEHNSFGDEGAANHTRLCQEYGHAGVELFVYGQEATNPHAPKPLKFPARQTLEASMAIARLHQLEEDNCVFIQQNPAVIDQGVFHNDVIAVGNQNVLFYHEQAFLNTQAKLDEIKRKLDTELYFIEVPTAKVSINDAVKSYLFNTQIITLPSGEMAIIAPTDCQENPAVYAYLNELLSLNTPIKQVLYFDVKQSMQNGGGPACLRLRVAMNEREVAAVNQHTLLTDALFTRLNTWVEKHYRDRLSTEDLADPQLVIESRTALDELTQIMKLGSVYPFQR.

Substrate is bound by residues 19–28 (AGLSFGNVAS), N110, and 137–138 (HR). Residue E174 is part of the active site. R214 is a binding site for substrate. H250 is a catalytic residue. Residues D252 and N362 each contribute to the substrate site. The Nucleophile role is filled by C368.

It belongs to the succinylarginine dihydrolase family. As to quaternary structure, homodimer.

It carries out the reaction N(2)-succinyl-L-arginine + 2 H2O + 2 H(+) = N(2)-succinyl-L-ornithine + 2 NH4(+) + CO2. Its pathway is amino-acid degradation; L-arginine degradation via AST pathway; L-glutamate and succinate from L-arginine: step 2/5. Its function is as follows. Catalyzes the hydrolysis of N(2)-succinylarginine into N(2)-succinylornithine, ammonia and CO(2). The polypeptide is N-succinylarginine dihydrolase (Shewanella oneidensis (strain ATCC 700550 / JCM 31522 / CIP 106686 / LMG 19005 / NCIMB 14063 / MR-1)).